We begin with the raw amino-acid sequence, 770 residues long: Transducin-like enhancer protein 1 (770 aa).

The q domain stretch occupies residues M1–Q131. Disordered regions lie at residues L128–P157 and H176–D348. Residues H132–S199 are GP domain. Basic and acidic residues-rich tracts occupy residues A178–P196 and R209–D246. A ccN domain region spans residues N200–P268. A Nuclear localization signal motif is present at residues K225–K228. S239 bears the Phosphoserine mark. The segment covering P257–H266 has biased composition (low complexity). 3 positions are modified to phosphoserine; by CDK1: S259, S263, and S267. A compositionally biased stretch (basic and acidic residues) spans S267–A283. The segment at R269 to V450 is SP domain. Positions S284 to S298 are enriched in low complexity. S286 is modified (phosphoserine). A compositionally biased stretch (basic and acidic residues) spans K300–A310. WD repeat units lie at residues G470–T501, N528–D558, S572–D602, G614–D644, L696–R726, and K737–E767.

This sequence belongs to the WD repeat Groucho/TLE family. As to quaternary structure, homooligomer and heterooligomer with other family members. Binds RUNX1, RUNX3, FOXA2, KDM6A, UTY, histone H3, HESX1, ESRRG and the NF-kappa-B subunit RELA. Interacts with HES1 (via WRPW motif). Binds TCF7, LEF1, TCF7L1 and TCF7L2. Interacts with SIX3. Interacts with EFNB1. Interacts with TLE4. Interacts with FOXG1/BF-1; the interaction is inhibited by TLE6/GRG6. Phosphorylated, probably by CDK1. The degree of phosphorylation varies throughout the cell cycle, and is highest at the G2/M transition. Becomes hyperphosphorylated in response to cell differentiation and interaction with HES1 or RUNX1. In terms of processing, ubiquitinated by XIAP/BIRC4. In all tissues examined, mostly in brain, liver and muscle.

The protein resides in the nucleus. Functionally, transcriptional corepressor that binds to a number of transcription factors. Inhibits NF-kappa-B-regulated gene expression. Inhibits the transcriptional activation mediated by FOXA2, and by CTNNB1 and TCF family members in Wnt signaling. Enhances FOXG1/BF-1- and HES1-mediated transcriptional repression. The effects of full-length TLE family members may be modulated by association with dominant-negative AES. Unusual function as coactivator for ESRRG. The polypeptide is Transducin-like enhancer protein 1 (TLE1) (Homo sapiens (Human)).